Reading from the N-terminus, the 155-residue chain is Small ribosomal subunit protein uS7 (155 aa).

Belongs to the universal ribosomal protein uS7 family. In terms of assembly, part of the 30S ribosomal subunit. Contacts proteins S9 and S11.

Its function is as follows. One of the primary rRNA binding proteins, it binds directly to 16S rRNA where it nucleates assembly of the head domain of the 30S subunit. Is located at the subunit interface close to the decoding center, probably blocks exit of the E-site tRNA. This Xylella fastidiosa (strain M23) protein is Small ribosomal subunit protein uS7.